Consider the following 236-residue polypeptide: WUSCHEL-related homeobox 4 (236 aa).

The segment at residues 88–152 (AGTTRWNPSA…NHKARERQKQ (65 aa)) is a DNA-binding region (homeobox; WUS-type). The interval 169–188 (PATANETKEAPEKKEKDVED) is disordered. Over residues 174–187 (ETKEAPEKKEKDVE) the composition is skewed to basic and acidic residues.

This sequence belongs to the WUS homeobox family.

Its subcellular location is the nucleus. Functionally, transcription factor which may be involved in developmental processes. This is WUSCHEL-related homeobox 4 (WOX4) from Oryza sativa subsp. indica (Rice).